Consider the following 233-residue polypeptide: Large ribosomal subunit protein eL6x (233 aa).

Positions 48-72 (HDAKSKVDAPVEKPPKFYPAEDVKK) are enriched in basic and acidic residues. The tract at residues 48–80 (HDAKSKVDAPVEKPPKFYPAEDVKKPLPNRRTA) is disordered.

This sequence belongs to the eukaryotic ribosomal protein eL6 family.

The sequence is that of Large ribosomal subunit protein eL6x (RPL6C) from Arabidopsis thaliana (Mouse-ear cress).